We begin with the raw amino-acid sequence, 497 residues long: Probable cytosol aminopeptidase (497 aa).

Mn(2+) is bound by residues Lys-265 and Asp-270. Lys-277 is a catalytic residue. The Mn(2+) site is built by Asp-288, Asp-347, and Glu-349. Residue Arg-351 is part of the active site.

It belongs to the peptidase M17 family. It depends on Mn(2+) as a cofactor.

It localises to the cytoplasm. The enzyme catalyses Release of an N-terminal amino acid, Xaa-|-Yaa-, in which Xaa is preferably Leu, but may be other amino acids including Pro although not Arg or Lys, and Yaa may be Pro. Amino acid amides and methyl esters are also readily hydrolyzed, but rates on arylamides are exceedingly low.. It carries out the reaction Release of an N-terminal amino acid, preferentially leucine, but not glutamic or aspartic acids.. Its function is as follows. Presumably involved in the processing and regular turnover of intracellular proteins. Catalyzes the removal of unsubstituted N-terminal amino acids from various peptides. This is Probable cytosol aminopeptidase from Geobacillus thermodenitrificans (strain NG80-2).